Reading from the N-terminus, the 235-residue chain is Proteasome subunit alpha type-2-B (235 aa).

Lys-64 is covalently cross-linked (Glycyl lysine isopeptide (Lys-Gly) (interchain with G-Cter in ubiquitin)).

The protein belongs to the peptidase T1A family. In terms of assembly, component of the 20S core complex of the 26S proteasome. The 26S proteasome is composed of a core protease (CP), known as the 20S proteasome, capped at one or both ends by the 19S regulatory particle (RP/PA700). The 20S proteasome core is composed of 28 subunits that are arranged in four stacked rings, resulting in a barrel-shaped structure. The two end rings are each formed by seven alpha subunits, and the two central rings are each formed by seven beta subunits. The catalytic chamber with the active sites is on the inside of the barrel.

It is found in the cytoplasm. It localises to the nucleus. Functionally, the proteasome is a multicatalytic proteinase complex which is characterized by its ability to cleave peptides with Arg, Phe, Tyr, Leu, and Glu adjacent to the leaving group at neutral or slightly basic pH. The proteasome has an ATP-dependent proteolytic activity. This chain is Proteasome subunit alpha type-2-B (PAB2), found in Arabidopsis thaliana (Mouse-ear cress).